A 345-amino-acid chain; its full sequence is Green-sensitive opsin (345 aa).

Residues 1 to 37 (MENGTEGKNFYIPMNNRTGLVRSPYEYPQYYLADPWQ) are Extracellular-facing. Asn3 and Asn16 each carry an N-linked (GlcNAc...) asparagine glycan. A helical membrane pass occupies residues 38 to 62 (FKLLGIYMFFLILTGFPINALTLVV). The Cytoplasmic portion of the chain corresponds to 63 to 74 (TAQNKKLRQPLN). Residues 75-100 (FILVNLAVAGLIMVCFGFTVCIYSCM) form a helical membrane-spanning segment. Residues 101-114 (VGYFSLGPLGCTIE) lie on the Extracellular side of the membrane. Cysteines 111 and 188 form a disulfide. Residues 115–134 (GFMATLGGQVSLWSLVVLAI) form a helical membrane-spanning segment. The Cytoplasmic segment spans residues 135-153 (ERYIVVCKPMGSFKFTATH). The helical transmembrane segment at 154–177 (SAAGCAFTWIMASSCAVPPLVGWS) threads the bilayer. Topologically, residues 178–203 (RYIPEGIQVSCGPDYYTLAPGFNNES) are extracellular. N-linked (GlcNAc...) asparagine glycosylation occurs at Asn201. The chain crosses the membrane as a helical span at residues 204-231 (FVMYMFSCHFCVPVFTIFFTYGSLVMTV). The Cytoplasmic segment spans residues 232–253 (KAAAAQQQDSASTQKAEKEVTR). The chain crosses the membrane as a helical span at residues 254 to 277 (MCFLMVLGFLLAWVPYASYAAWIF). The Extracellular portion of the chain corresponds to 278–285 (FNRGAAFS). The chain crosses the membrane as a helical span at residues 286-310 (AMSMAIPSFFSKSSALFNPIIYILL). N6-(retinylidene)lysine is present on Lys297. Topologically, residues 311-345 (NKQFRNCMLATIGMGGMVEDETSVSTSKTEVSTAA) are cytoplasmic.

This sequence belongs to the G-protein coupled receptor 1 family. Opsin subfamily. Phosphorylated on some or all of the serine and threonine residues present in the C-terminal region. In terms of tissue distribution, the color pigments are found in the cone photoreceptor cells.

It is found in the membrane. Its function is as follows. Visual pigments are the light-absorbing molecules that mediate vision. They consist of an apoprotein, opsin, covalently linked to cis-retinal. The polypeptide is Green-sensitive opsin (Oryzias latipes (Japanese rice fish)).